The chain runs to 313 residues: Methionyl-tRNA formyltransferase (313 aa).

Serine 109–proline 112 provides a ligand contact to (6S)-5,6,7,8-tetrahydrofolate.

This sequence belongs to the Fmt family.

It carries out the reaction L-methionyl-tRNA(fMet) + (6R)-10-formyltetrahydrofolate = N-formyl-L-methionyl-tRNA(fMet) + (6S)-5,6,7,8-tetrahydrofolate + H(+). Attaches a formyl group to the free amino group of methionyl-tRNA(fMet). The formyl group appears to play a dual role in the initiator identity of N-formylmethionyl-tRNA by promoting its recognition by IF2 and preventing the misappropriation of this tRNA by the elongation apparatus. This chain is Methionyl-tRNA formyltransferase, found in Pelotomaculum thermopropionicum (strain DSM 13744 / JCM 10971 / SI).